The chain runs to 496 residues: MELVVKSVSPETLKTATLVVAIGEGRKLGVAAKQLDELSGGAISAVLKRGDLAGKVGQSLLLQSLPNLKAERVLLVGVGKEAELGDRPFRKIISGILTTLKGLGGSDATLALDEIVVKGRDSYGKTRLLAETLVDGGYIFDEFKSQKAEPRALKKITLLTIKAAQAEVERAVTHAQAIANGMSFTRDLGNLPPNICHPTFLGEQAKALGKEFKGLKVEVLDEKKIKELGMGSFYAVGQGSDQPPRLIVMQYNGGKKSEKPYALVGKGITFDTGGISLKPGLGMDEMKYDMGGAASVFGTLRAVLELKLPINLVCILACAENMPSGGATRPGDIVTTLSGQTVEILNTDAEGRLVLCDALTYAERFKPQAVIDIATLTGACIVALGSHTSGLLGNSDELIEQLLSAGKAADDRAWQLPLFDEYQEQLDSPFADIANIGGPKAGTITAACFLSRFAKNFNWAHLDIAGTAWTSGGKDKGATGRPVPLLTQYLLDRAKA.

Mn(2+) is bound by residues Lys266 and Asp271. Lys278 is an active-site residue. 3 residues coordinate Mn(2+): Asp289, Asp348, and Glu350. Arg352 is an active-site residue.

Belongs to the peptidase M17 family. It depends on Mn(2+) as a cofactor.

The protein resides in the cytoplasm. The catalysed reaction is Release of an N-terminal amino acid, Xaa-|-Yaa-, in which Xaa is preferably Leu, but may be other amino acids including Pro although not Arg or Lys, and Yaa may be Pro. Amino acid amides and methyl esters are also readily hydrolyzed, but rates on arylamides are exceedingly low.. It carries out the reaction Release of an N-terminal amino acid, preferentially leucine, but not glutamic or aspartic acids.. Its function is as follows. Presumably involved in the processing and regular turnover of intracellular proteins. Catalyzes the removal of unsubstituted N-terminal amino acids from various peptides. The sequence is that of Probable cytosol aminopeptidase from Pseudomonas fluorescens (strain SBW25).